The sequence spans 797 residues: Probable exo-1,4-beta-xylosidase xlnD (797 aa).

Residues 1–20 (MPGAASIVAVLAALLPTALG) form the signal peptide. 4 N-linked (GlcNAc...) asparagine glycosylation sites follow: N23, N87, N142, and N237. Residue D310 is part of the active site. N-linked (GlcNAc...) asparagine glycans are attached at residues N326, N391, N404, N442, N479, N521, N617, N644, N657, N684, and N706.

It belongs to the glycosyl hydrolase 3 family.

The protein localises to the secreted. The catalysed reaction is Hydrolysis of (1-&gt;4)-beta-D-xylans, to remove successive D-xylose residues from the non-reducing termini.. It participates in glycan degradation; xylan degradation. Functionally, xylan 1,4-beta-xylosidase involved in the hydrolysis of xylan, a major structural heterogeneous polysaccharide found in plant biomass representing the second most abundant polysaccharide in the biosphere, after cellulose. The sequence is that of Probable exo-1,4-beta-xylosidase xlnD (xlnD) from Aspergillus flavus (strain ATCC 200026 / FGSC A1120 / IAM 13836 / NRRL 3357 / JCM 12722 / SRRC 167).